Reading from the N-terminus, the 290-residue chain is Inositol monophosphatase 2 (290 aa).

The Mg(2+) site is built by Glu83, Asp103, Ile105, and Asp106. Glu83 is a binding site for substrate. Substrate contacts are provided by residues Ile105–Thr108, Gly207–Ser209, Gln226, and Asp233. Residue Asp233 coordinates Mg(2+).

Belongs to the inositol monophosphatase superfamily. Homodimer. Mg(2+) serves as cofactor. Mostly expressed in brain, small intestine, heart, kidney, and spleen (at protein level).

The protein localises to the cytoplasm. The enzyme catalyses a myo-inositol phosphate + H2O = myo-inositol + phosphate. The catalysed reaction is 1D-myo-inositol 1-phosphate + H2O = myo-inositol + phosphate. It carries out the reaction 1D-myo-inositol 2-phosphate + H2O = myo-inositol + phosphate. It catalyses the reaction 1D-myo-inositol 3-phosphate + H2O = myo-inositol + phosphate. The enzyme catalyses 1D-myo-inositol 4-phosphate + H2O = myo-inositol + phosphate. The catalysed reaction is 1D-myo-inositol 5-phosphate + H2O = myo-inositol + phosphate. It carries out the reaction 1D-myo-inositol 6-phosphate + H2O = myo-inositol + phosphate. It catalyses the reaction alpha-D-glucose 1-phosphate + H2O = D-glucose + phosphate. The enzyme catalyses glycerol 2-phosphate + H2O = glycerol + phosphate. The catalysed reaction is adenosine 2'-phosphate + H2O = adenosine + phosphate. It participates in polyol metabolism; myo-inositol biosynthesis; myo-inositol from D-glucose 6-phosphate: step 2/2. Phosphatase that can use myo-inositol monophosphates, myo-inositol 1,4-diphosphate, scyllo-inositol-1,4-diphosphate, glucose-1-phosphate, beta-glycerophosphate and 2'-AMP as substrates in vitro. No physiological substrates has been described yet. Has been implicated as the pharmacological target for lithium Li(+) action in brain. The polypeptide is Inositol monophosphatase 2 (Mus musculus (Mouse)).